The following is a 261-amino-acid chain: Taurine import ATP-binding protein TauB (261 aa).

The ABC transporter domain occupies 4–233 (LTADRVSVRY…RWRAGDSARA (230 aa)). 38 to 45 (GPSGCGKT) contacts ATP.

It belongs to the ABC transporter superfamily. Taurine importer (TC 3.A.1.17.1) family. In terms of assembly, the complex is composed of two ATP-binding proteins (TauB), two transmembrane proteins (TauC) and a solute-binding protein (TauA).

It localises to the cell inner membrane. The catalysed reaction is taurine(out) + ATP + H2O = taurine(in) + ADP + phosphate + H(+). Functionally, part of the ABC transporter complex TauABC involved in taurine import. Responsible for energy coupling to the transport system. The protein is Taurine import ATP-binding protein TauB of Chromobacterium violaceum (strain ATCC 12472 / DSM 30191 / JCM 1249 / CCUG 213 / NBRC 12614 / NCIMB 9131 / NCTC 9757 / MK).